Here is a 243-residue protein sequence, read N- to C-terminus: Ribonuclease PH (243 aa).

Phosphate is bound by residues R91 and 129-131; that span reads GTR.

The protein belongs to the RNase PH family. In terms of assembly, homohexameric ring arranged as a trimer of dimers.

It carries out the reaction tRNA(n+1) + phosphate = tRNA(n) + a ribonucleoside 5'-diphosphate. Its function is as follows. Phosphorolytic 3'-5' exoribonuclease that plays an important role in tRNA 3'-end maturation. Removes nucleotide residues following the 3'-CCA terminus of tRNAs; can also add nucleotides to the ends of RNA molecules by using nucleoside diphosphates as substrates, but this may not be physiologically important. Probably plays a role in initiation of 16S rRNA degradation (leading to ribosome degradation) during starvation. The sequence is that of Ribonuclease PH from Burkholderia lata (strain ATCC 17760 / DSM 23089 / LMG 22485 / NCIMB 9086 / R18194 / 383).